Reading from the N-terminus, the 483-residue chain is Proline--tRNA ligase (483 aa).

It belongs to the class-II aminoacyl-tRNA synthetase family. ProS type 3 subfamily. As to quaternary structure, homodimer.

It localises to the cytoplasm. The enzyme catalyses tRNA(Pro) + L-proline + ATP = L-prolyl-tRNA(Pro) + AMP + diphosphate. Its function is as follows. Catalyzes the attachment of proline to tRNA(Pro) in a two-step reaction: proline is first activated by ATP to form Pro-AMP and then transferred to the acceptor end of tRNA(Pro). The sequence is that of Proline--tRNA ligase from Sulfurisphaera tokodaii (strain DSM 16993 / JCM 10545 / NBRC 100140 / 7) (Sulfolobus tokodaii).